A 190-amino-acid polypeptide reads, in one-letter code: MALHLSLSHQSWTSPAHPITSSDPTRSSVPGTGLSRRVDFLGSCKINGVFVVKRKDRRRMRGGEVRASMEQALGTQEMEAIVGKVTEVNKDTFWPIVKAAGDKPVVLDMFTQWCGPCKAMAPKYEKLAEEYLDVIFLKLDCNQENKTLAKELGIRVVPTFKILKENSVVGEVTGAKYDKLLEAIQAARSS.

The disordered stretch occupies residues 1-31 (MALHLSLSHQSWTSPAHPITSSDPTRSSVPG). The N-terminal 77 residues, 1 to 77 (MALHLSLSHQ…SMEQALGTQE (77 aa)), are a transit peptide targeting the chloroplast. A compositionally biased stretch (polar residues) spans 7-30 (LSHQSWTSPAHPITSSDPTRSSVP). One can recognise a Thioredoxin domain in the interval 78-189 (MEAIVGKVTE…LLEAIQAARS (112 aa)). Residues Cys-114 and Cys-117 each act as nucleophile in the active site. Cys-114 and Cys-117 are oxidised to a cystine.

This sequence belongs to the thioredoxin family. Plant F-type subfamily. Forms a complex with heterodimeric ferredoxin-thioredoxin reductase (FTR) and ferredoxin.

The protein resides in the plastid. The protein localises to the chloroplast. Participates in various redox reactions through the reversible oxidation of the active center dithiol to a disulfide. The F form is known to activate a number of enzymes of the photosynthetic carbon cycle. In Spinacia oleracea (Spinach), this protein is Thioredoxin F-type, chloroplastic.